The following is a 100-amino-acid chain: uncharacterized protein (100 aa).

This is an uncharacterized protein from Mycoplasma genitalium (strain ATCC 33530 / DSM 19775 / NCTC 10195 / G37) (Mycoplasmoides genitalium).